Here is a 141-residue protein sequence, read N- to C-terminus: Nucleoside diphosphate kinase (141 aa).

ATP-binding residues include K11, F59, R87, T93, R104, and N114. H117 functions as the Pros-phosphohistidine intermediate in the catalytic mechanism.

It belongs to the NDK family. Homotetramer. Requires Mg(2+) as cofactor.

The protein resides in the cytoplasm. It carries out the reaction a 2'-deoxyribonucleoside 5'-diphosphate + ATP = a 2'-deoxyribonucleoside 5'-triphosphate + ADP. The catalysed reaction is a ribonucleoside 5'-diphosphate + ATP = a ribonucleoside 5'-triphosphate + ADP. Its function is as follows. Major role in the synthesis of nucleoside triphosphates other than ATP. The ATP gamma phosphate is transferred to the NDP beta phosphate via a ping-pong mechanism, using a phosphorylated active-site intermediate. This is Nucleoside diphosphate kinase from Janthinobacterium sp. (strain Marseille) (Minibacterium massiliensis).